The chain runs to 164 residues: Probable metalloprotease y4qB (164 aa).

The MPN domain occupies 5–142 (IWIPESVVEA…WLPHAWIGQL (138 aa)). Residues His89, His91, and Asp103 each coordinate Zn(2+).

It belongs to the peptidase M67B family.

This chain is Probable metalloprotease y4qB, found in Sinorhizobium fredii (strain NBRC 101917 / NGR234).